We begin with the raw amino-acid sequence, 274 residues long: 2,3,4,5-tetrahydropyridine-2,6-dicarboxylate N-succinyltransferase (274 aa).

Positions 104 and 141 each coordinate substrate.

Belongs to the transferase hexapeptide repeat family. As to quaternary structure, homotrimer.

The protein resides in the cytoplasm. It catalyses the reaction (S)-2,3,4,5-tetrahydrodipicolinate + succinyl-CoA + H2O = (S)-2-succinylamino-6-oxoheptanedioate + CoA. It participates in amino-acid biosynthesis; L-lysine biosynthesis via DAP pathway; LL-2,6-diaminopimelate from (S)-tetrahydrodipicolinate (succinylase route): step 1/3. The polypeptide is 2,3,4,5-tetrahydropyridine-2,6-dicarboxylate N-succinyltransferase (Shewanella sp. (strain ANA-3)).